We begin with the raw amino-acid sequence, 108 residues long: Ig light chain C region (108 aa).

One can recognise an Ig-like domain in the interval 7 to 102 (PTVSIYCPSL…LTPALAKSFQ (96 aa)). 2 cysteine pairs are disulfide-bonded: Cys13–Cys106 and Cys28–Cys86.

In Aquarana catesbeiana (American bullfrog), this protein is Ig light chain C region.